Reading from the N-terminus, the 880-residue chain is Endoglucanase E-4 (880 aa).

An N-terminal signal peptide occupies residues 1 to 46 (MSVTEPPPRRRGRHSRARRFLTSLGATAALTAGMLGVPLATGTAHA). The active-site Nucleophile is Asp104. Active-site residues include His422, His427, Asp461, and Glu470. The region spanning 504-652 (PDGPEIFVEA…GVPVWGTAPE (149 aa)) is the CBM3 domain. The segment at 647 to 688 (WGTAPEEGEEPGGGEGPGGGEEPGEDVTPPSAPGSPAVRDVT) is disordered. Positions 678–770 (APGSPAVRDV…TVSFTTLAEN (93 aa)) constitute a Fibronectin type-III domain. The 110-residue stretch at 771 to 880 (GGGPDASCTV…TLNGEPCALA (110 aa)) folds into the CBM2 domain.

The protein belongs to the glycosyl hydrolase 9 (cellulase E) family.

It carries out the reaction Endohydrolysis of (1-&gt;4)-beta-D-glucosidic linkages in cellulose, lichenin and cereal beta-D-glucans.. It functions in the pathway glycan metabolism; cellulose degradation. The protein is Endoglucanase E-4 (celD) of Thermobifida fusca (Thermomonospora fusca).